Here is a 1043-residue protein sequence, read N- to C-terminus: Unconventional myosin-Ia (1043 aa).

Positions 8 to 694 (VGVEDLVLLE…TLFYLEEQRR (687 aa)) constitute a Myosin motor domain. Residue 101–108 (GESGAGKT) participates in ATP binding. Residues 571–593 (VTTLMKNLYSKNPNYIRCIKPNE) form an actin-binding region. IQ domains lie at 697–719 (LQQLATLIQKTYRGWRCRTHYQL), 720–742 (MRKSQIVISSWFRGNMQKKHYRK), and 743–772 (MKASALLIQAFVRGWKARKNYRKYFRSGAA). Positions 858 to 1042 (KASYPQSVPI…KGSRCLEVTV (185 aa)) constitute a TH1 domain.

This sequence belongs to the TRAFAC class myosin-kinesin ATPase superfamily. Myosin family. Post-translationally, phosphorylated by ALPK1.

Involved in directing the movement of organelles along actin filaments. The sequence is that of Unconventional myosin-Ia (MYO1A) from Bos taurus (Bovine).